The chain runs to 66 residues: Prophage transcriptional regulatory protein (66 aa).

This Escherichia coli (strain K12) protein is Prophage transcriptional regulatory protein (croE).